Consider the following 155-residue polypeptide: SsrA-binding protein (155 aa).

The protein belongs to the SmpB family.

The protein resides in the cytoplasm. In terms of biological role, required for rescue of stalled ribosomes mediated by trans-translation. Binds to transfer-messenger RNA (tmRNA), required for stable association of tmRNA with ribosomes. tmRNA and SmpB together mimic tRNA shape, replacing the anticodon stem-loop with SmpB. tmRNA is encoded by the ssrA gene; the 2 termini fold to resemble tRNA(Ala) and it encodes a 'tag peptide', a short internal open reading frame. During trans-translation Ala-aminoacylated tmRNA acts like a tRNA, entering the A-site of stalled ribosomes, displacing the stalled mRNA. The ribosome then switches to translate the ORF on the tmRNA; the nascent peptide is terminated with the 'tag peptide' encoded by the tmRNA and targeted for degradation. The ribosome is freed to recommence translation, which seems to be the essential function of trans-translation. The protein is SsrA-binding protein of Bacillus cereus (strain ATCC 10987 / NRS 248).